The following is a 379-amino-acid chain: uncharacterized protein (379 aa).

The protein belongs to the mimivirus L17x/L18x family.

This is an uncharacterized protein from Acanthamoeba polyphaga mimivirus (APMV).